Consider the following 224-residue polypeptide: 7-cyano-7-deazaguanine synthase (224 aa).

Residue 10–20 (FSGGQDSTTCL) coordinates ATP. The Zn(2+) site is built by cysteine 193, cysteine 201, cysteine 204, and cysteine 207.

It belongs to the QueC family. Zn(2+) is required as a cofactor.

It carries out the reaction 7-carboxy-7-deazaguanine + NH4(+) + ATP = 7-cyano-7-deazaguanine + ADP + phosphate + H2O + H(+). It functions in the pathway purine metabolism; 7-cyano-7-deazaguanine biosynthesis. In terms of biological role, catalyzes the ATP-dependent conversion of 7-carboxy-7-deazaguanine (CDG) to 7-cyano-7-deazaguanine (preQ(0)). The sequence is that of 7-cyano-7-deazaguanine synthase from Neisseria gonorrhoeae (strain ATCC 700825 / FA 1090).